We begin with the raw amino-acid sequence, 255 residues long: Ribonuclease HII (255 aa).

An RNase H type-2 domain is found at 58-247; it reads RYIAGIDEAG…VKSMVLGARY (190 aa). A divalent metal cation is bound by residues Asp64, Glu65, and Asp156.

It belongs to the RNase HII family. Requires Mn(2+) as cofactor. Mg(2+) serves as cofactor.

The protein localises to the cytoplasm. The catalysed reaction is Endonucleolytic cleavage to 5'-phosphomonoester.. In terms of biological role, endonuclease that specifically degrades the RNA of RNA-DNA hybrids. This Syntrophomonas wolfei subsp. wolfei (strain DSM 2245B / Goettingen) protein is Ribonuclease HII.